A 282-amino-acid chain; its full sequence is Phospholipid phosphatase 1 (282 aa).

Residues 1–6 (MFDKPR) are Cytoplasmic-facing. The PDZ-binding; involved in localization to the apical cell membrane motif lies at 5 to 7 (PRL). The helical transmembrane segment at 7–27 (LPYVVLDVICVLLAGLPFIIL) threads the bilayer. The Extracellular segment spans residues 28–53 (TSRHTPFQRGVFCTDESIKYPYREDT). The helical transmembrane segment at 54–74 (IPYALLGGIVIPFCIIVMITG) threads the bilayer. The Cytoplasmic portion of the chain corresponds to 75-88 (ETLSVYFNVLHSNS). The chain crosses the membrane as a helical span at residues 89–109 (FVSNHYIATIYKAVGAFLFGA). Over 110–164 (SASQSLTDIAKYSIGRLRPHFLAVCNPDWSKINCSDGYIENFVCQGNEQKVREGR) the chain is Extracellular. The interval 120–128 (KYSIGRLRP) is phosphatase sequence motif I. N142 carries N-linked (GlcNAc...) asparagine glycosylation. Residues 165–185 (LSFYSGHSSFSMYCMLFVALY) form a helical membrane-spanning segment. The phosphatase sequence motif II stretch occupies residues 168–171 (YSGH). Catalysis depends on H171, which acts as the Proton donors. At 186 to 194 (LQARMKGDW) the chain is on the cytoplasmic side. A helical transmembrane segment spans residues 195–215 (ARLLRPMLQFGLVALSIYVGL). The phosphatase sequence motif III stretch occupies residues 216-227 (SRVSDYKHHWSD). The Extracellular portion of the chain corresponds to 216 to 229 (SRVSDYKHHWSDVL). H223 serves as the catalytic Nucleophile. The helical transmembrane segment at 230-250 (IGLIQGAVVAILVVLYVTDFF) threads the bilayer. Residues 251–282 (KTTESNKERKEDSHTTLHETTNRQSYARNHEP) lie on the Cytoplasmic side of the membrane. The span at 257–271 (KERKEDSHTTLHETT) shows a compositional bias: basic and acidic residues. Positions 257-282 (KERKEDSHTTLHETTNRQSYARNHEP) are disordered. Positions 272 to 282 (NRQSYARNHEP) are enriched in polar residues.

Belongs to the PA-phosphatase related phosphoesterase family. In terms of assembly, forms functional homodimers and homooligomers that are not required for substrate recognition and catalytic activity. Can also form heterooligomers with PLPP2 and PLPP3. In terms of processing, N-glycosylated. N-linked sugars are of the complex type. N-glycosylation is not required for the phosphatase activity.

The protein resides in the cell membrane. It localises to the apical cell membrane. It is found in the membrane raft. Its subcellular location is the membrane. The protein localises to the caveola. It catalyses the reaction a 1,2-diacyl-sn-glycero-3-phosphate + H2O = a 1,2-diacyl-sn-glycerol + phosphate. The enzyme catalyses 1,2-dihexadecanoyl-sn-glycero-3-phosphate + H2O = 1,2-dihexadecanoyl-sn-glycerol + phosphate. It carries out the reaction 1,2-di-(9Z-octadecenoyl)-sn-glycero-3-phosphate + H2O = 1,2-di-(9Z-octadecenoyl)-sn-glycerol + phosphate. The catalysed reaction is a monoacyl-sn-glycero-3-phosphate + H2O = a monoacylglycerol + phosphate. It catalyses the reaction (9Z)-octadecenoyl-sn-glycero-3-phosphate + H2O = (9Z-octadecenoyl)-glycerol + phosphate. The enzyme catalyses a 1-acyl-sn-glycero-3-phosphate + H2O = a 1-acyl-sn-glycerol + phosphate. It carries out the reaction 1-(9Z-octadecenoyl)-sn-glycero-3-phosphate + H2O = 1-(9Z-octadecenoyl)-sn-glycerol + phosphate. The catalysed reaction is a 1,2-diacyl-sn-glycerol 3-diphosphate + H2O = a 1,2-diacyl-sn-glycero-3-phosphate + phosphate + H(+). It catalyses the reaction sphing-4-enine 1-phosphate + H2O = sphing-4-enine + phosphate. The enzyme catalyses an N-acylsphing-4-enine 1-phosphate + H2O = an N-acylsphing-4-enine + phosphate. It carries out the reaction N-(octanoyl)-sphing-4-enine-1-phosphate + H2O = N-octanoylsphing-4-enine + phosphate. The catalysed reaction is N-(9Z-octadecenoyl)-ethanolamine phosphate + H2O = N-(9Z-octadecenoyl) ethanolamine + phosphate. It catalyses the reaction 1-hexadecanoyl-2-(9Z-octadecenoyl)-sn-glycero-3-phosphate + H2O = 1-hexadecanoyl-2-(9Z-octadecenoyl)-sn-glycerol + phosphate. It participates in lipid metabolism; phospholipid metabolism. Magnesium-independent phospholipid phosphatase. Insensitive to N-ethylmaleimide. Its function is as follows. Magnesium-independent phospholipid phosphatase of the plasma membrane that catalyzes the dephosphorylation of a variety of glycerolipid and sphingolipid phosphate esters including phosphatidate/PA, lysophosphatidate/LPA, diacylglycerol pyrophosphate/DGPP, sphingosine 1-phosphate/S1P and ceramide 1-phosphate/C1P. Also acts on N-oleoyl ethanolamine phosphate/N-(9Z-octadecenoyl)-ethanolamine phosphate, a potential physiological compound. Through its extracellular phosphatase activity allows both the hydrolysis and the cellular uptake of these bioactive lipid mediators from the milieu, regulating signal transduction in different cellular processes. It is for instance essential for the extracellular hydrolysis of S1P and subsequent conversion into intracellular S1P. Involved in the regulation of inflammation, platelets activation, cell proliferation and migration among other processes. May also have an intracellular activity to regulate phospholipid-mediated signaling pathways. This is Phospholipid phosphatase 1 from Rattus norvegicus (Rat).